Consider the following 616-residue polypeptide: MAKLRSATSTQGRNMAGARALWRATGVKDSDFGKPIVAIANSFTQFVPGHVHLKDMGSLVAGAIEEAGGIAKEFNTIAVDDGIAMGHGGMLYSLPSRELIADSVEYMVNAHCADALVCISNCDKITPGMLMAALRLNIPVVFVSGGPMEAGKTKLSDKLIKLDLVDAMVAAADDRVSDEDSEKIERSACPTCGSCSGMFTANSMNCLTEALGLSLPGNGSLLATHSDRRELFLEAGRRVMALANRYYRDDDESALPRNIASFKAFENAMALDIAMGGSSNTVLHLLAAAQEAKVDFTMADIDRLSRQVPHLCKVAPSTPKYHMEDVHRAGGVMGILGELDRAGLLHTDVSHVAGENLKAVLVQYDLVQTQDEAVQQFYAAGPAGIPTTKAFSQSCRWPSLDVDRQEGCIRTREFAFSQEGGLAVLSGNIAADGCIVKTAGVDEANHTFVGHARVYESQDDAVAGILGGEVVAGDVVVIRYEGPKGGPGMQEMLYPTSYLKSKGLGTSCALITDGRFSGGTSGLSIGHVSPEAAAGGTIALVETGDRIEIDIPARSITLAVSDEVLETRRQAMQARGKQAWKPVNRERSVSLALKAYAMLATSADKGAVRDVSKLED.

Asp81 is a Mg(2+) binding site. Cys122 is a binding site for [2Fe-2S] cluster. Asp123 and Lys124 together coordinate Mg(2+). Residue Lys124 is modified to N6-carboxylysine. Cys195 is a [2Fe-2S] cluster binding site. Glu491 contributes to the Mg(2+) binding site. The active-site Proton acceptor is the Ser517.

The protein belongs to the IlvD/Edd family. As to quaternary structure, homodimer. It depends on [2Fe-2S] cluster as a cofactor. Requires Mg(2+) as cofactor.

The enzyme catalyses (2R)-2,3-dihydroxy-3-methylbutanoate = 3-methyl-2-oxobutanoate + H2O. It catalyses the reaction (2R,3R)-2,3-dihydroxy-3-methylpentanoate = (S)-3-methyl-2-oxopentanoate + H2O. It participates in amino-acid biosynthesis; L-isoleucine biosynthesis; L-isoleucine from 2-oxobutanoate: step 3/4. The protein operates within amino-acid biosynthesis; L-valine biosynthesis; L-valine from pyruvate: step 3/4. Functionally, functions in the biosynthesis of branched-chain amino acids. Catalyzes the dehydration of (2R,3R)-2,3-dihydroxy-3-methylpentanoate (2,3-dihydroxy-3-methylvalerate) into 2-oxo-3-methylpentanoate (2-oxo-3-methylvalerate) and of (2R)-2,3-dihydroxy-3-methylbutanoate (2,3-dihydroxyisovalerate) into 2-oxo-3-methylbutanoate (2-oxoisovalerate), the penultimate precursor to L-isoleucine and L-valine, respectively. In Shewanella loihica (strain ATCC BAA-1088 / PV-4), this protein is Dihydroxy-acid dehydratase.